Consider the following 256-residue polypeptide: DNA repair protein RecO (256 aa).

Belongs to the RecO family.

Involved in DNA repair and RecF pathway recombination. The chain is DNA repair protein RecO from Rhizobium etli (strain CIAT 652).